The following is a 495-amino-acid chain: Loline biosynthesis cluster 1 transcription factor lolU1 (495 aa).

It is found in the nucleus. Functionally, transcriptional regulator that may regulate the expression of the loline biosynthesis cluster 1, one of the 2 clusters involved in the biosynthesis of loline alkaloids, potent insecticidal agents composed of a pyrrolizidine ring system and an uncommon ether bridge linking carbons 2 and 7. This is Loline biosynthesis cluster 1 transcription factor lolU1 from Epichloe uncinata (Endophyte fungus).